Reading from the N-terminus, the 332-residue chain is Endonuclease 8-like 2 (332 aa).

The active-site Schiff-base intermediate with DNA is the proline 2. Residue glutamate 3 is the Proton donor of the active site. The Proton donor; for beta-elimination activity role is filled by lysine 50. Lysine 50 bears the N6-acetyllysine mark. Positions 59–121 (DEEMGPPGSS…EDDSEYLERD (63 aa)) are disordered. Serine 68 is subject to Phosphoserine. Basic and acidic residues predominate over residues 74–84 (PQKEVQKEGAA). The segment covering 94–104 (GQKTLDGSSRS) has biased composition (polar residues). Position 154 is an N6-acetyllysine (lysine 154). Asparagine 231 provides a ligand contact to DNA. The segment at 284–320 (QVYQKEQCPAGHQVMKEAFGPEDGLQRLTWWCPQCQP) adopts an FPG-type zinc-finger fold. Arginine 310 functions as the Proton donor; for delta-elimination activity in the catalytic mechanism.

Belongs to the FPG family. As to quaternary structure, binds EP300. As to expression, detected in testis, skeletal muscle, heart, brain, placenta, lung, pancreas, kidney and liver.

The protein localises to the nucleus. The enzyme catalyses 2'-deoxyribonucleotide-(2'-deoxyribose 5'-phosphate)-2'-deoxyribonucleotide-DNA = a 3'-end 2'-deoxyribonucleotide-(2,3-dehydro-2,3-deoxyribose 5'-phosphate)-DNA + a 5'-end 5'-phospho-2'-deoxyribonucleoside-DNA + H(+). Acetylation of Lys-50 leads to loss of DNA nicking activity. Acetylation of Lys-154 has no effect. Involved in base excision repair of DNA damaged by oxidation or by mutagenic agents. Has DNA glycosylase activity towards 5-hydroxyuracil and other oxidized derivatives of cytosine with a preference for mismatched double-stranded DNA (DNA bubbles). Has low or no DNA glycosylase activity towards thymine glycol, 2-hydroxyadenine, hypoxanthine and 8-oxoguanine. Has AP (apurinic/apyrimidinic) lyase activity and introduces nicks in the DNA strand. Cleaves the DNA backbone by beta-delta elimination to generate a single-strand break at the site of the removed base with both 3'- and 5'-phosphates. This is Endonuclease 8-like 2 (NEIL2) from Homo sapiens (Human).